Here is a 1030-residue protein sequence, read N- to C-terminus: Translation initiation factor IF-2 (1030 aa).

2 stretches are compositionally biased toward low complexity: residues 56–69 (APSE…AADS) and 111–132 (PNIV…APIK). Disordered regions lie at residues 56–361 (APSE…KRRQ) and 394–434 (SKPK…REQK). The span at 134 to 144 (ARPEKSAEKPE) shows a compositional bias: basic and acidic residues. The segment covering 154-164 (AASAEPAKSPS) has biased composition (low complexity). The segment covering 188–206 (LLRKPEIVRRSEAKPERTS) has biased composition (basic and acidic residues). A compositionally biased stretch (low complexity) spans 259 to 273 (VAASASGVPAAASRV). Residues 522-695 (TRPPVVTVMG…LLVTEVEELV (174 aa)) enclose the tr-type G domain. Positions 531 to 538 (GHVDHGKT) are G1. A GTP-binding site is contributed by 531-538 (GHVDHGKT). A G2 region spans residues 556–560 (GITQH). Positions 581-584 (DTPG) are G3. GTP is bound by residues 581–585 (DTPGH) and 635–638 (NKCD). A G4 region spans residues 635-638 (NKCD). A G5 region spans residues 671–673 (SAI).

The protein belongs to the TRAFAC class translation factor GTPase superfamily. Classic translation factor GTPase family. IF-2 subfamily.

It is found in the cytoplasm. One of the essential components for the initiation of protein synthesis. Protects formylmethionyl-tRNA from spontaneous hydrolysis and promotes its binding to the 30S ribosomal subunits. Also involved in the hydrolysis of GTP during the formation of the 70S ribosomal complex. The chain is Translation initiation factor IF-2 from Synechococcus elongatus (strain ATCC 33912 / PCC 7942 / FACHB-805) (Anacystis nidulans R2).